The sequence spans 682 residues: MNSYQNKNEYEILDAKRNTCHMSNCYPKYPLANDPQMYLRNTHYKDWINMCEEASYASSGPSQLFKVGGSIVAKILGMIPEVGPLLSWMVSLFWPTIEEKNTVWEDMIKYVANLLKQELTNDTLNRATSNLSGLNESLNIYNRALAAWKQNKNNFASGELIRSYINDLHILFTRDIQSDFSLGGYETVLLPSYASAANLHLLLLRDVAIYGKELGYPSTDVEFYYNEQKYYTEKYSNYCVNTYKSGLESKKQIGWSDFNRYRREMTLSVLDIVALFPLYDTGLYPSKDGKIHVKAELTREIYSDVINDHVYGLMVPYISFEHAESLYTRRPHAFTWLKGFRFVTNSINSWTFLSGGENRYFLTHGEGTIYNGPFLGQDTEYGGTSSYIDISNNSSIYNLWTKNYEWIYPWTDPVNITKINFSITDNSNSSESIYGAERMNKPTVRTDFNFLLNRAGNGPTTYNDYNHILSYMLINGETFGQKRHGYSFAFTHSSVDRYNTIVPDKIVQIPAVKTNLVGANIIKGPGHTGGDLLKLEYERFLSLRIKLIASMTFRIRIRYASNISGQMMINIGYQNPTYFNIIPTTSRDYTELKFEDFQLVDTSYIYSGGPSISSNTLWLDNFSNGPVIIDKIEFIPLGITLNQAQGYDTYDQNANGMYHQNYSNSGYNYNQEYNTYYQSYNN.

This sequence belongs to the delta endotoxin family.

Promotes colloidosmotic lysis by binding to the midgut epithelial cells of mosquitos. Has larvicidal activity against Culex pipiens molestus, but not to Anopheles stephensi. The protein is Pesticidal crystal protein Cry19Ba of Bacillus thuringiensis subsp. higo.